Consider the following 163-residue polypeptide: Nucleotide-binding protein PM1656 (163 aa).

This sequence belongs to the YajQ family.

Nucleotide-binding protein. This chain is Nucleotide-binding protein PM1656, found in Pasteurella multocida (strain Pm70).